A 237-amino-acid chain; its full sequence is MADETNLEGVAAVEATGGEPQREGRGRGRGRGGNDRGGERGGRGRRDDRRGRGNNDEEGGEELIEKLVHINRVSKTVKGGKRFGFAALVVVGDGKGRAGFGKGKAREVPEAITKATAAAKRAMVRVPLKEGRTLHHDGKGRFGAGKVNVRSAPAGTGIIAGGPMRAVFESLGVSDVVTKSVGTSNPYNMIRATFDALTDQTSPKSVAQRRGKKVADLLGRGGASQVEAEAAAEAIAE.

The interval Met-1–Gly-59 is disordered. Over residues Pro-20 to Asn-55 the composition is skewed to basic and acidic residues. The region spanning Leu-63 to Val-126 is the S5 DRBM domain.

It belongs to the universal ribosomal protein uS5 family. In terms of assembly, part of the 30S ribosomal subunit. Contacts proteins S4 and S8.

In terms of biological role, with S4 and S12 plays an important role in translational accuracy. Its function is as follows. Located at the back of the 30S subunit body where it stabilizes the conformation of the head with respect to the body. In Novosphingobium aromaticivorans (strain ATCC 700278 / DSM 12444 / CCUG 56034 / CIP 105152 / NBRC 16084 / F199), this protein is Small ribosomal subunit protein uS5.